The sequence spans 274 residues: Glycerol uptake facilitator protein (274 aa).

A run of 2 helical transmembrane segments spans residues 3–23 (AFWG…GVCA) and 38–58 (IVVV…VGGI). The NPA 1 motif lies at 64–66 (NPA). 3 consecutive transmembrane segments (helical) span residues 82 to 102 (VPVY…IIYL), 131 to 151 (FANV…ILAI), and 164 to 184 (IVGF…GYAI). The short motif at 185-187 (NPA) is the NPA 2 element. The helical transmembrane segment at 238-258 (ITSSFWIVSVILVVVLLGLYV) threads the bilayer.

This sequence belongs to the MIP/aquaporin (TC 1.A.8) family.

The protein localises to the cell membrane. It carries out the reaction glycerol(in) = glycerol(out). Mediates glycerol diffusion across the cytoplasmic membrane via a pore-type mechanism. This chain is Glycerol uptake facilitator protein (glpF), found in Bacillus subtilis (strain 168).